The sequence spans 176 residues: Viral interleukin-10 homolog (176 aa).

The N-terminal stretch at M1–P25 is a signal peptide. 2 disulfide bridges follow: C38–C128 and C82–C133. A glycan (N-linked (GlcNAc...) asparagine; by host) is linked at N152.

This sequence belongs to the IL-10 family. Homodimer; disulfide-linked.

It is found in the secreted. Functional viral IL-10 homolog. Can bind to the human IL-10 receptor and compete with human IL-10 for binding sites. Requires both subunits of the human IL-10 receptor complex to induce signal transduction events and biological activities. IL-10 signaling pathway has several immunosuppressive activities that are exploited by the virus. Inhibits TLR-induced type I interferon production in host plasmacytoid dendritic cells. The polypeptide is Viral interleukin-10 homolog (UL111A) (Homo sapiens (Human)).